We begin with the raw amino-acid sequence, 450 residues long: Keratin, type I cytoskeletal 25 (450 aa).

Positions 1–24 (MSLRLPSGSRRASPRPTTGSLRLS) are disordered. Residues 1–78 (MSLRLPSGSR…MNEGGLLSGN (78 aa)) form a head region. The tract at residues 79–114 (EKVTMQNLNDRLASYLENVRALEEANADLEQKIKGW) is coil 1A. Positions 79-394 (EKVTMQNLND…LLIGGDDGAC (316 aa)) constitute an IF rod domain. A linker 1 region spans residues 115-136 (YEKFGPGSCRGLDHDYSRYFPI). A coil 1B region spans residues 137–228 (IEDLKNQIIA…KNHKEEMQVL (92 aa)). The interval 229-251 (QCAAGGNVNVEMNAAPGVDLTVL) is linker 12. A coil 2 region spans residues 252–390 (LNNMRAEYEA…ETYCLLIGGD (139 aa)). The interval 391-450 (DGACKSGGYKSKDYAAGNMGNQMKDPIKAIVVKKVLEEVDQRSKILTTRLHSLEEKSQSN) is tail. Position 442 is a phosphoserine (S442).

It belongs to the intermediate filament family. Heterodimer of a type I and a type II keratin. Heterodimer with type II keratin KRT5 leading to the formation of keratin intermediate filament (KIF) network. Interacts with KRT6A to form filaments.

The protein resides in the cytoplasm. In terms of biological role, essential for the proper assembly of type I and type II keratin protein complexes and formation of keratin intermediate filaments in the inner root sheath (irs). Plays a role in the cytoskeleton organization. The sequence is that of Keratin, type I cytoskeletal 25 from Capra hircus (Goat).